A 157-amino-acid polypeptide reads, in one-letter code: Probable succinate transporter subunit YjjB (157 aa).

Helical transmembrane passes span 8 to 28 (LALA…AMVF), 50 to 70 (MILM…SMLV), 87 to 107 (VFTV…TAMI), and 129 to 149 (FLTA…PGLW).

This sequence belongs to the ThrE exporter (TC 2.A.79) family. In terms of assembly, the transporter is composed of YjjB and YjjP.

It is found in the cell inner membrane. Involved in succinate export with YjjP. Both proteins are required for export. In Shigella flexneri serotype 5b (strain 8401), this protein is Probable succinate transporter subunit YjjB.